A 466-amino-acid chain; its full sequence is Soluble pyridine nucleotide transhydrogenase (466 aa).

An FAD-binding site is contributed by Glu-36–Cys-45.

This sequence belongs to the class-I pyridine nucleotide-disulfide oxidoreductase family. FAD is required as a cofactor.

The protein resides in the cytoplasm. The catalysed reaction is NAD(+) + NADPH = NADH + NADP(+). Functionally, conversion of NADPH, generated by peripheral catabolic pathways, to NADH, which can enter the respiratory chain for energy generation. This is Soluble pyridine nucleotide transhydrogenase from Shigella boydii serotype 18 (strain CDC 3083-94 / BS512).